Reading from the N-terminus, the 431-residue chain is Adenylosuccinate synthetase (431 aa).

Residues 13–19 and 41–43 contribute to the GTP site; these read GDEGKGK and GHT. Asp14 functions as the Proton acceptor in the catalytic mechanism. Mg(2+)-binding residues include Asp14 and Gly41. IMP contacts are provided by residues 14–17, 39–42, Thr130, Arg144, Gln225, Thr240, and Arg304; these read DEGK and NAGH. His42 serves as the catalytic Proton donor. 300–306 is a substrate binding site; sequence ATTGRKR. GTP-binding positions include Arg306, 332-334, and 415-417; these read KLD and STG.

Belongs to the adenylosuccinate synthetase family. Homodimer. Mg(2+) serves as cofactor.

Its subcellular location is the cytoplasm. The enzyme catalyses IMP + L-aspartate + GTP = N(6)-(1,2-dicarboxyethyl)-AMP + GDP + phosphate + 2 H(+). It participates in purine metabolism; AMP biosynthesis via de novo pathway; AMP from IMP: step 1/2. Its function is as follows. Plays an important role in the de novo pathway of purine nucleotide biosynthesis. Catalyzes the first committed step in the biosynthesis of AMP from IMP. This Shewanella frigidimarina (strain NCIMB 400) protein is Adenylosuccinate synthetase.